The following is a 145-amino-acid chain: Superoxide dismutase [Mn/Fe] (145 aa).

Positions 10 and 64 each coordinate Fe(3+). Residues histidine 10 and histidine 64 each contribute to the Mn(2+) site.

The protein belongs to the iron/manganese superoxide dismutase family. The cofactor is Mn(2+). Fe(3+) serves as cofactor.

It catalyses the reaction 2 superoxide + 2 H(+) = H2O2 + O2. Functionally, destroys superoxide anion radicals which are normally produced within the cells and which are toxic to biological systems. Catalyzes the dismutation of superoxide anion radicals into O2 and H2O2 by successive reduction and oxidation of the transition metal ion at the active site. The sequence is that of Superoxide dismutase [Mn/Fe] (sodA) from Streptococcus acidominimus.